The sequence spans 483 residues: METPAGKADRPRDHDSEQSQDNVVSWEGEDDPTNPLNWSPLAKWVHVAIISIGTFTIAREKSPLASSIFAPGVVELAHEFHEENQLLTTIVVSIFVLGLAFGPLLAAPISEMYGRWICYTVFNILYTIFTVACGVSTNISMLIVFRFFAGVTGSAPLTIGGGTVADLFPMHQRGLALSFVTLGQAVAPAIGPVAGGFLTQNLGWRWVFWLLTIVNGTITICQILFTRETYAMTILNRRAKRLRKTTVHSSVTHRSVNFAIFFYSLVRPCKLLLLSPISLIVALCCAVIYGILYVLVTTFSPVFQDTYHFSIGISGLGYLGLGIGNLVGLWIFSMTSDRYMVAQANRFGSAKPEHRLPMMILSGPVIAAGLFWYGWSVQARIHWMMPIVGSGIVGLGNMFFFMPMVSYLVDSFPTYAASAIAANAVLRSIGGAVLPLAGQRMYDTLGFGWGNSILAFMALVFNPLLIAIYRYGEYIRTRWQVKL.

The interval 1-31 (METPAGKADRPRDHDSEQSQDNVVSWEGEDD) is disordered. Positions 7–17 (KADRPRDHDSE) are enriched in basic and acidic residues. 11 consecutive transmembrane segments (helical) span residues 89–109 (TIVV…AAPI), 124–144 (ILYT…MLIV), 147–167 (FFAG…VADL), 179–199 (FVTL…GFLT), 206–226 (WVFW…ILFT), 276–296 (PISL…YVLV), 311–331 (IGIS…GLWI), 357–377 (PMMI…GWSV), 385–405 (MPIV…MPMV), 416–436 (AASA…VLPL), and 448–468 (GWGN…LIAI).

This sequence belongs to the major facilitator superfamily.

The protein localises to the cell membrane. In terms of biological role, MFS-type transporter; part of the gene cluster that mediates the biosynthesis of heptelidic acid (HA), a sesquiterpene lactone that acts as an inhibitor of glyceraldehyde-3-phosphatedehydrogenase (GAPDH) and a growth inhibitor of the salt-tolerant lactic acid bacteria in soy sauce brewing. Might be required for efficient secretion of heptelidic acid. The protein is MFS-type transporter hepF (hepF) of Aspergillus oryzae (strain ATCC 42149 / RIB 40) (Yellow koji mold).